The following is a 610-amino-acid chain: Elongation factor 4 (610 aa).

One can recognise a tr-type G domain in the interval 14-196; sequence NRIRNFSIIA…ALVANIPPPK (183 aa). GTP contacts are provided by residues 26 to 31 and 143 to 146; these read DHGKST and NKID.

Belongs to the TRAFAC class translation factor GTPase superfamily. Classic translation factor GTPase family. LepA subfamily.

The protein resides in the cell inner membrane. It catalyses the reaction GTP + H2O = GDP + phosphate + H(+). Functionally, required for accurate and efficient protein synthesis under certain stress conditions. May act as a fidelity factor of the translation reaction, by catalyzing a one-codon backward translocation of tRNAs on improperly translocated ribosomes. Back-translocation proceeds from a post-translocation (POST) complex to a pre-translocation (PRE) complex, thus giving elongation factor G a second chance to translocate the tRNAs correctly. Binds to ribosomes in a GTP-dependent manner. The chain is Elongation factor 4 from Legionella pneumophila (strain Paris).